A 443-amino-acid chain; its full sequence is Ribosomal protein uS12 methylthiotransferase RimO (443 aa).

In terms of domain architecture, MTTase N-terminal spans 8–118; the sequence is PKVGFVSLGC…VVNAVHEVVP (111 aa). The [4Fe-4S] cluster site is built by Cys17, Cys53, Cys82, Cys151, Cys155, and Cys158. The 240-residue stretch at 137-376 folds into the Radical SAM core domain; sequence LTPRHYAYLK…AHQQAISSAR (240 aa). The TRAM domain occupies 378 to 443; it reads QLRIGKEIEV…DEYDMWAEPV (66 aa).

Belongs to the methylthiotransferase family. RimO subfamily. [4Fe-4S] cluster is required as a cofactor.

It localises to the cytoplasm. The enzyme catalyses L-aspartate(89)-[ribosomal protein uS12]-hydrogen + (sulfur carrier)-SH + AH2 + 2 S-adenosyl-L-methionine = 3-methylsulfanyl-L-aspartate(89)-[ribosomal protein uS12]-hydrogen + (sulfur carrier)-H + 5'-deoxyadenosine + L-methionine + A + S-adenosyl-L-homocysteine + 2 H(+). In terms of biological role, catalyzes the methylthiolation of an aspartic acid residue of ribosomal protein uS12. In Pseudomonas putida (strain W619), this protein is Ribosomal protein uS12 methylthiotransferase RimO.